We begin with the raw amino-acid sequence, 59 residues long: Small ribosomal subunit protein bS21 (59 aa).

Belongs to the bacterial ribosomal protein bS21 family.

The polypeptide is Small ribosomal subunit protein bS21 (Acholeplasma laidlawii (strain PG-8A)).